The sequence spans 531 residues: Polyamine aminopropyltransferase 1 (531 aa).

The next 7 membrane-spanning stretches (helical) occupy residues 27-47 (FLLLLAVFLCAACGLVYELAL), 59-79 (VLQTSVVISVMVFAMGVGSLA), 96-116 (GVLALVGGLSVLMLYAAFAWL), 122-142 (AMIVVSLVVGLLIGAEIPLLM), 160-180 (MFAVDYIGALVGGLCFPLFLL), 188-208 (GALVVGVVNAVAGVIVVVFIF), and 218-238 (AGLLAGVALVLAALGTTYVLA). The interval 205–476 (VFIFRRQTGR…VLARPGTEAP (272 aa)) is spermidine synthase. The region spanning 233-471 (TTYVLADDLE…GNWGFVLARP (239 aa)) is the PABS domain. Residue Q263 participates in S-methyl-5'-thioadenosine binding. Positions 298 and 320 each coordinate spermidine. S-methyl-5'-thioadenosine is bound by residues E340 and 374 to 375 (DA). Residue D392 is the Proton acceptor of the active site.

This sequence belongs to the spermidine/spermine synthase family. In terms of assembly, homodimer or homotetramer.

The protein localises to the cell membrane. It catalyses the reaction S-adenosyl 3-(methylsulfanyl)propylamine + putrescine = S-methyl-5'-thioadenosine + spermidine + H(+). The protein operates within amine and polyamine biosynthesis; spermidine biosynthesis; spermidine from putrescine: step 1/1. Catalyzes the irreversible transfer of a propylamine group from the amino donor S-adenosylmethioninamine (decarboxy-AdoMet) to putrescine (1,4-diaminobutane) to yield spermidine. The sequence is that of Polyamine aminopropyltransferase 1 from Streptomyces coelicolor (strain ATCC BAA-471 / A3(2) / M145).